A 204-amino-acid polypeptide reads, in one-letter code: Probable UMP-CMP kinase 1 (204 aa).

Position 31 to 36 (31 to 36) interacts with ATP; sequence GSGKGT. The NMP stretch occupies residues 51-80; that stretch reads SAGDLLRAEIKSGSEFGAMIQSMIAEGRIV. Residues Arg-57, 78-80, and 105-108 each bind a ribonucleoside 5'-phosphate; these read RIV and GFPR. Residue Asn-112 coordinates CMP. Residues 143 to 151 are LID; the sequence is SRNQGREDD. Position 144 (Arg-144) interacts with ATP. A ribonucleoside 5'-phosphate-binding residues include Arg-148 and Arg-159. Lys-187 contacts ATP.

It belongs to the adenylate kinase family. UMP-CMP kinase subfamily. Monomer. The cofactor is Mg(2+).

The protein resides in the cytoplasm. The protein localises to the nucleus. It catalyses the reaction CMP + ATP = CDP + ADP. It carries out the reaction dCMP + ATP = dCDP + ADP. The catalysed reaction is UMP + ATP = UDP + ADP. Its function is as follows. Catalyzes the phosphorylation of pyrimidine nucleoside monophosphates at the expense of ATP. Plays an important role in de novo pyrimidine nucleotide biosynthesis. Has preference for UMP and CMP as phosphate acceptors. In Arabidopsis thaliana (Mouse-ear cress), this protein is Probable UMP-CMP kinase 1 (UMK1).